Reading from the N-terminus, the 305-residue chain is uncharacterized protein (305 aa).

A helical transmembrane segment spans residues 8–28 (IGALVTAVIAIGIVFSHMILF).

The protein localises to the membrane. This is an uncharacterized protein from Bacillus subtilis (strain 168).